The following is a 237-amino-acid chain: Glucosamine-6-phosphate deaminase (237 aa).

Catalysis depends on aspartate 67, which acts as the Proton acceptor; for enolization step. Asparagine 136 serves as the catalytic For ring-opening step. The Proton acceptor; for ring-opening step role is filled by histidine 138. Glutamate 143 (for ring-opening step) is an active-site residue.

The protein belongs to the glucosamine/galactosamine-6-phosphate isomerase family. NagB subfamily.

The catalysed reaction is alpha-D-glucosamine 6-phosphate + H2O = beta-D-fructose 6-phosphate + NH4(+). It functions in the pathway amino-sugar metabolism; N-acetylneuraminate degradation; D-fructose 6-phosphate from N-acetylneuraminate: step 5/5. In terms of biological role, catalyzes the reversible isomerization-deamination of glucosamine 6-phosphate (GlcN6P) to form fructose 6-phosphate (Fru6P) and ammonium ion. The protein is Glucosamine-6-phosphate deaminase of Lysinibacillus sphaericus (strain C3-41).